We begin with the raw amino-acid sequence, 84 residues long: Small ribosomal subunit protein bS20 (84 aa).

This sequence belongs to the bacterial ribosomal protein bS20 family.

Its function is as follows. Binds directly to 16S ribosomal RNA. The sequence is that of Small ribosomal subunit protein bS20 from Porphyromonas gingivalis (strain ATCC 33277 / DSM 20709 / CIP 103683 / JCM 12257 / NCTC 11834 / 2561).